Here is a 308-residue protein sequence, read N- to C-terminus: Apolipoprotein E (308 aa).

The N-terminal stretch at 1 to 18 (MKFLWAALVVTLLAGCQA) is a signal peptide. A run of 8 repeats spans residues 75–96 (LLIE…KQVG), 97–118 (PIAQ…ARLE), 119–140 (SDME…AALG), 141–162 (QNTD…KRLL), 163–184 (RDAE…EAAE), 185–206 (RGVS…LQAI), 207–224 (PPSQ…QKVR), and 225–246 (GRLE…DQME). The segment at 75–246 (LLIEETMKEV…RLDDVRDQME (172 aa)) is 8 X 22 AA approximate tandem repeats. The LDL and other lipoprotein receptors binding stretch occupies residues 153–163 (HLRKLRKRLLR). 157–160 (LRKR) is a heparin binding site. The tract at residues 205 to 281 (AIPPSQQLRE…SWFEPLVQDM (77 aa)) is lipid-binding and lipoprotein association. 220 to 227 (GQKVRGRL) is a heparin binding site. Residues 257–308 (SQVRLQAEAFQTRLKSWFEPLVQDMQRQWASLVEKVQSSLGISPSTKPSKTK) are homooligomerization. The segment at 269-281 (RLKSWFEPLVQDM) is specificity for association with VLDL.

Belongs to the apolipoprotein A1/A4/E family. Homotetramer. May interact with ABCA1; functionally associated with ABCA1 in the biogenesis of HDLs. May interact with APP/A4 amyloid-beta peptide; the interaction is extremely stable in vitro but its physiological significance is unclear. May interact with MAPT. May interact with MAP2. In the cerebrospinal fluid, interacts with secreted SORL1. Interacts with PMEL; this allows the loading of PMEL luminal fragment on ILVs to induce fibril nucleation. In terms of processing, APOE exists as multiple glycosylated and sialylated glycoforms within cells and in plasma. The extent of glycosylation and sialylation are tissue and context specific. Post-translationally, glycated in plasma VLDL. Phosphorylated by FAM20C in the extracellular medium.

Its subcellular location is the secreted. The protein resides in the extracellular space. It localises to the extracellular matrix. It is found in the extracellular vesicle. The protein localises to the endosome. Its subcellular location is the multivesicular body. Its function is as follows. APOE is an apolipoprotein, a protein associating with lipid particles, that mainly functions in lipoprotein-mediated lipid transport between organs via the plasma and interstitial fluids. APOE is a core component of plasma lipoproteins and is involved in their production, conversion and clearance. Apolipoproteins are amphipathic molecules that interact both with lipids of the lipoprotein particle core and the aqueous environment of the plasma. As such, APOE associates with chylomicrons, chylomicron remnants, very low density lipoproteins (VLDL) and intermediate density lipoproteins (IDL) but shows a preferential binding to high-density lipoproteins (HDL). It also binds a wide range of cellular receptors including the LDL receptor/LDLR and the very low-density lipoprotein receptor/VLDLR that mediate the cellular uptake of the APOE-containing lipoprotein particles. Finally, APOE also has a heparin-binding activity and binds heparan-sulfate proteoglycans on the surface of cells, a property that supports the capture and the receptor-mediated uptake of APOE-containing lipoproteins by cells. This is Apolipoprotein E (APOE) from Pteropus alecto (Black flying fox).